The sequence spans 469 residues: Adenosylhomocysteinase (469 aa).

Substrate contacts are provided by Thr63, Asp139, and Glu164. Position 165-167 (165-167 (TTT)) interacts with NAD(+). Substrate contacts are provided by Lys194 and Asp198. Residues Asn199, 228–233 (GYGDVG), Glu251, Asn300, 321–323 (IGH), and Asn375 each bind NAD(+).

Belongs to the adenosylhomocysteinase family. NAD(+) is required as a cofactor.

Its subcellular location is the cytoplasm. The catalysed reaction is S-adenosyl-L-homocysteine + H2O = L-homocysteine + adenosine. It functions in the pathway amino-acid biosynthesis; L-homocysteine biosynthesis; L-homocysteine from S-adenosyl-L-homocysteine: step 1/1. May play a key role in the regulation of the intracellular concentration of adenosylhomocysteine. This Pseudomonas fluorescens (strain ATCC BAA-477 / NRRL B-23932 / Pf-5) protein is Adenosylhomocysteinase.